Reading from the N-terminus, the 1023-residue chain is Presequence protease, mitochondrial (1023 aa).

The N-terminal 62 residues, 1–62, are a transit peptide targeting the mitochondrion; sequence MFRQSKTIIT…PDLFLTAVKL (62 aa). Zn(2+) is bound at residue histidine 99. The Proton acceptor role is filled by glutamate 102. Residues histidine 103 and glutamate 200 each coordinate Zn(2+). A disulfide bond links cysteine 114 and cysteine 551.

This sequence belongs to the peptidase M16 family. PreP subfamily. Monomer and homodimer; homodimerization is induced by binding of the substrate. Zn(2+) is required as a cofactor. In terms of processing, a disulfide bond locks the enzyme in the closed conformation preventing substrate entry into the catalytic chamber.

It is found in the mitochondrion matrix. Mainly exists in a closed and catalytically competent conformation but a closed-to-open switch allows substrate entry into the catalytic chamber. Substrate binding induces closure and dimerization. A disulfide bond may lock the enzyme in a closed conformation preventing substrate entry into the catalytic chamber, participating in redox regulation of the enzyme. Inhibited by metal-chelating agents. Inhibited by nickel and zinc excess, and slightly activated by manganese. In terms of biological role, metalloendopeptidase of the mitochondrial matrix that functions in peptide cleavage and degradation rather than in protein processing. Has an ATP-independent activity. Specifically cleaves peptides in the range of 5 to 65 residues. Shows a preference for cleavage after small polar residues and before basic residues, but without any positional preference. Degrades the transit peptides of mitochondrial proteins after their cleavage. Also degrades other unstructured peptides. The chain is Presequence protease, mitochondrial (pitrm1) from Danio rerio (Zebrafish).